A 346-amino-acid chain; its full sequence is Protein RecA (346 aa).

67 to 74 (GPESSGKT) serves as a coordination point for ATP.

Belongs to the RecA family.

It is found in the cytoplasm. Functionally, can catalyze the hydrolysis of ATP in the presence of single-stranded DNA, the ATP-dependent uptake of single-stranded DNA by duplex DNA, and the ATP-dependent hybridization of homologous single-stranded DNAs. It interacts with LexA causing its activation and leading to its autocatalytic cleavage. This chain is Protein RecA, found in Frankia alni (strain DSM 45986 / CECT 9034 / ACN14a).